Consider the following 144-residue polypeptide: Large ribosomal subunit protein uL15 (144 aa).

The segment at 1-51 is disordered; the sequence is MELNSIKPGSGSKHAKRRVGRGIGSGLGKTAGRGHKGQKSRAGGYHKVGFE. Residues 21–31 are compositionally biased toward gly residues; the sequence is RGIGSGLGKTA.

This sequence belongs to the universal ribosomal protein uL15 family. Part of the 50S ribosomal subunit.

In terms of biological role, binds to the 23S rRNA. This is Large ribosomal subunit protein uL15 from Leptothrix cholodnii (strain ATCC 51168 / LMG 8142 / SP-6) (Leptothrix discophora (strain SP-6)).